A 512-amino-acid polypeptide reads, in one-letter code: ADP,ATP carrier protein 4 (512 aa).

Transmembrane regions (helical) follow at residues 34 to 54 (ISKF…QNLI), 71 to 91 (ISFL…VIYV), 102 to 122 (IFYL…YVIF), 157 to 177 (FSLF…LLFW), 192 to 212 (FYPL…HFLE), 231 to 251 (FHTL…IVSI), 296 to 316 (LIAT…GPWK), 330 to 350 (AAFI…FVLL), 361 to 381 (FTSA…FFAV), 390 to 410 (LIIA…IGAI), and 476 to 496 (SISI…IWAT).

It belongs to the ADP/ATP translocase tlc family.

The protein localises to the cell membrane. Functionally, provides the rickettsial cell with host ATP in exchange for rickettsial ADP. This is an obligate exchange system. This energy acquiring activity is an important component of rickettsial parasitism. This is ADP,ATP carrier protein 4 (tlcD) from Rickettsia prowazekii (strain Madrid E).